A 72-amino-acid polypeptide reads, in one-letter code: GFYFRSIQGFYFKRIQGNICSEPKKVGRCRRSFPRFYFDSETGKCTPFIYGGCGGNGNNFETLHACRAICRA.

The first 9 residues, 1-9 (GFYFRSIQG), serve as a signal peptide directing secretion. Positions 10 to 16 (FYFKRIQ) are excised as a propeptide. In terms of domain architecture, BPTI/Kunitz inhibitor spans 20–70 (CSEPKKVGRCRRSFPRFYFDSETGKCTPFIYGGCGGNGNNFETLHACRAIC). Intrachain disulfides connect Cys-20–Cys-70, Cys-29–Cys-53, and Cys-45–Cys-66.

It belongs to the venom Kunitz-type family. Sea anemone type 2 potassium channel toxin subfamily.

It localises to the nematocyst. The protein resides in the secreted. In terms of biological role, serine protease inhibitor that also shows protective effect in a cytotoxicity model. It inhibits the serine protease trypsin (Ki=630 nM). It significantly increases neuroblastoma cell viability in an in vitro neurotoxicity model, being a consequence of an effective decrease of reactive oxygen species (ROS) level in the cells. It also seems to protect cells by inhibiting ATP-induced purinoceptor (P2RX7) activation. The sequence is that of PI-stichotoxin-Hcr2k from Radianthus crispa (Leathery sea anemone).